The primary structure comprises 150 residues: 5-hydroxytryptamine receptor 1B (150 aa).

Topologically, residues 1-83 (VEARSRILKQ…AARERKATKT (83 aa)) are extracellular. The span at 27-40 (DSPGSTSSVTSINS) shows a compositional bias: polar residues. The disordered stretch occupies residues 27–50 (DSPGSTSSVTSINSRAPDLPSESG). The helical transmembrane segment at 84–105 (LGIILGAFIVCWLPFFIISLAM) threads the bilayer. Topologically, residues 106-115 (PICKDACWFH) are cytoplasmic. The helical transmembrane segment at 116 to 138 (LAIFDFFTWLGYLNSLINPIIYT) threads the bilayer. The short motif at 133 to 137 (NPIIY) is the NPxxY motif; important for ligand-induced conformation changes and signaling element. Topologically, residues 139 to 150 (MFNEDFKQAFHK) are extracellular.

It belongs to the G-protein coupled receptor 1 family. In terms of assembly, homodimer. Heterodimer with HTR1D. In terms of processing, phosphorylated. Desensitization of the receptor may be mediated by its phosphorylation. Palmitoylated.

It localises to the cell membrane. In terms of biological role, G-protein coupled receptor for 5-hydroxytryptamine (serotonin). Also functions as a receptor for ergot alkaloid derivatives, various anxiolytic and antidepressant drugs and other psychoactive substances, such as lysergic acid diethylamide (LSD). Ligand binding causes a conformation change that triggers signaling via guanine nucleotide-binding proteins (G proteins) and modulates the activity of downstream effectors, such as adenylate cyclase. HTR1B is coupled to G(i)/G(o) G alpha proteins and mediates inhibitory neurotransmission by inhibiting adenylate cyclase activity. Arrestin family members inhibit signaling via G proteins and mediate activation of alternative signaling pathways. Regulates the release of 5-hydroxytryptamine, dopamine and acetylcholine in the brain, and thereby affects neural activity, nociceptive processing, pain perception, mood and behavior. Besides, plays a role in vasoconstriction of cerebral arteries. The protein is 5-hydroxytryptamine receptor 1B (HTR1B) of Sus scrofa (Pig).